The primary structure comprises 318 residues: NADH-ubiquinone oxidoreductase chain 1 (318 aa).

Transmembrane regions (helical) follow at residues 3-23, 68-88, 102-122, 146-166, 171-191, 222-242, 253-273, and 294-314; these read FVNLLTTIIPILLAVAFLTLL, LILFIIAPTLALTLALMMWIP, ILFMLALSSLAVYAILWSGWA, LAIIILSVLLMNGSFTLSTLI, HIWLLLPSWPLAMMWFISTLA, LFFLAEYANIIMMNALTTILF, EMYTTNFMLKTLLFTTFFLWI, and LPLTLVMCMWHITLPIILASI.

It belongs to the complex I subunit 1 family.

The protein resides in the mitochondrion inner membrane. The enzyme catalyses a ubiquinone + NADH + 5 H(+)(in) = a ubiquinol + NAD(+) + 4 H(+)(out). Its function is as follows. Core subunit of the mitochondrial membrane respiratory chain NADH dehydrogenase (Complex I) that is believed to belong to the minimal assembly required for catalysis. Complex I functions in the transfer of electrons from NADH to the respiratory chain. The immediate electron acceptor for the enzyme is believed to be ubiquinone. The chain is NADH-ubiquinone oxidoreductase chain 1 (MT-ND1) from Nyctalus plancyi velutinus (Fine-haired noctule).